Here is a 304-residue protein sequence, read N- to C-terminus: Quinolinate synthase 1 (304 aa).

Iminosuccinate is bound by residues histidine 24 and serine 41. Cysteine 86 lines the [4Fe-4S] cluster pocket. Residues tyrosine 112 to asparagine 114 and serine 129 contribute to the iminosuccinate site. Cysteine 171 is a binding site for [4Fe-4S] cluster. Iminosuccinate-binding positions include histidine 197–glutamate 199 and threonine 214. A [4Fe-4S] cluster-binding site is contributed by cysteine 259.

Belongs to the quinolinate synthase family. Type 2 subfamily. It depends on [4Fe-4S] cluster as a cofactor.

It localises to the cytoplasm. It carries out the reaction iminosuccinate + dihydroxyacetone phosphate = quinolinate + phosphate + 2 H2O + H(+). It participates in cofactor biosynthesis; NAD(+) biosynthesis; quinolinate from iminoaspartate: step 1/1. In terms of biological role, catalyzes the condensation of iminoaspartate with dihydroxyacetone phosphate to form quinolinate. The polypeptide is Quinolinate synthase 1 (Methanosarcina acetivorans (strain ATCC 35395 / DSM 2834 / JCM 12185 / C2A)).